The following is a 384-amino-acid chain: dTDP-dihydrostreptose--streptidine-6-phosphate dihydrostreptosyltransferase (384 aa).

The enzyme catalyses dTDP-L-dihydrostreptose + streptidine 6-phosphate = O-(1-&gt;4)-alpha-L-dihydrostreptosyl-streptidine 6-phosphate + dTDP + H(+). Its pathway is antibiotic biosynthesis; streptomycin biosynthesis. Is probably a dihydrostreptosyl glycosyltransferase, involved in the first glycosylation step condensing streptidine-6-phosphate and dihydrostreptose. In Streptomyces griseus, this protein is dTDP-dihydrostreptose--streptidine-6-phosphate dihydrostreptosyltransferase (strH).